Consider the following 104-residue polypeptide: MSTYAIIKTGGKQVKVEVGQAIYVEKINAEAGSEVTFNEVVLVGGDKTVVGTPVVEGATVVGTIEKQGKQKKVVTFKYKPKKGSHRKQGHRQPYTKVVINAINA.

This sequence belongs to the bacterial ribosomal protein bL21 family. Part of the 50S ribosomal subunit. Contacts protein L20.

Functionally, this protein binds to 23S rRNA in the presence of protein L20. The chain is Large ribosomal subunit protein bL21 from Streptococcus thermophilus (strain ATCC BAA-491 / LMD-9).